Here is a 461-residue protein sequence, read N- to C-terminus: tRNA modification GTPase MnmE (461 aa).

Residues arginine 23, glutamate 88, and arginine 127 each contribute to the (6S)-5-formyl-5,6,7,8-tetrahydrofolate site. In terms of domain architecture, TrmE-type G spans 223-383 (GLNTVIVGKP…LKECIKNLFF (161 aa)). A K(+)-binding site is contributed by asparagine 233. GTP is bound by residues 233–238 (NVGKSS), 252–258 (TEIPGTT), and 277–280 (DTAG). Serine 237 contributes to the Mg(2+) binding site. Positions 252, 254, and 257 each coordinate K(+). Residue threonine 258 coordinates Mg(2+). Lysine 461 contributes to the (6S)-5-formyl-5,6,7,8-tetrahydrofolate binding site.

Belongs to the TRAFAC class TrmE-Era-EngA-EngB-Septin-like GTPase superfamily. TrmE GTPase family. In terms of assembly, homodimer. Heterotetramer of two MnmE and two MnmG subunits. K(+) is required as a cofactor.

The protein resides in the cytoplasm. Exhibits a very high intrinsic GTPase hydrolysis rate. Involved in the addition of a carboxymethylaminomethyl (cmnm) group at the wobble position (U34) of certain tRNAs, forming tRNA-cmnm(5)s(2)U34. In Clostridium botulinum (strain Okra / Type B1), this protein is tRNA modification GTPase MnmE.